The primary structure comprises 383 residues: Arginine biosynthesis bifunctional protein ArgJ (383 aa).

The substrate site is built by T146, K168, T179, E259, N378, and T383. Residue T179 is the Nucleophile of the active site.

This sequence belongs to the ArgJ family. In terms of assembly, heterotetramer of two alpha and two beta chains.

The protein resides in the cytoplasm. It carries out the reaction N(2)-acetyl-L-ornithine + L-glutamate = N-acetyl-L-glutamate + L-ornithine. It catalyses the reaction L-glutamate + acetyl-CoA = N-acetyl-L-glutamate + CoA + H(+). It participates in amino-acid biosynthesis; L-arginine biosynthesis; L-ornithine and N-acetyl-L-glutamate from L-glutamate and N(2)-acetyl-L-ornithine (cyclic): step 1/1. Its pathway is amino-acid biosynthesis; L-arginine biosynthesis; N(2)-acetyl-L-ornithine from L-glutamate: step 1/4. Catalyzes two activities which are involved in the cyclic version of arginine biosynthesis: the synthesis of N-acetylglutamate from glutamate and acetyl-CoA as the acetyl donor, and of ornithine by transacetylation between N(2)-acetylornithine and glutamate. In Thermobifida fusca (strain YX), this protein is Arginine biosynthesis bifunctional protein ArgJ.